The following is a 448-amino-acid chain: 4-hydroxybenzoate transporter PcaK (448 aa).

Residues Met-1–Val-30 lie on the Cytoplasmic side of the membrane. The helical transmembrane segment at Val-31–Ile-51 threads the bilayer. Topologically, residues Ala-52–Gly-67 are periplasmic. The chain crosses the membrane as a helical span at residues Pro-68 to Ala-88. Topologically, residues Asp-89–Lys-94 are cytoplasmic. Residues Gly-95 to Thr-115 traverse the membrane as a helical segment. Residues Asn-116 to Gln-119 are Periplasmic-facing. The chain crosses the membrane as a helical span at residues Leu-120–Thr-140. At Leu-141–Ser-152 the chain is on the cytoplasmic side. A helical membrane pass occupies residues Leu-153–Ser-173. Over Ala-174–Ser-184 the chain is Periplasmic. The chain crosses the membrane as a helical span at residues Leu-185–Pro-205. The Cytoplasmic segment spans residues Glu-206 to Tyr-261. Residues Gly-262–Leu-282 traverse the membrane as a helical segment. The Periplasmic portion of the chain corresponds to Thr-283–Ala-301. The chain crosses the membrane as a helical span at residues Phe-302–Met-322. The Cytoplasmic portion of the chain corresponds to Asp-323–Lys-329. The chain crosses the membrane as a helical span at residues Val-330–Gly-350. A topological domain (periplasmic) is located at residue Asn-351. A helical membrane pass occupies residues Ile-352–Ala-372. Residues Met-373–Arg-398 lie on the Cytoplasmic side of the membrane. Residues Phe-399–Glu-419 form a helical membrane-spanning segment. The Periplasmic portion of the chain corresponds to Gln-420 to Val-421. A helical membrane pass occupies residues Leu-422–Val-442. Residues Ser-443–Thr-448 lie on the Cytoplasmic side of the membrane.

The protein belongs to the major facilitator superfamily. Aromatic acid:H(+) symporter (AAHS) (TC 2.A.1.15) family.

It is found in the cell inner membrane. Transports 4-hydroxybenzoate (4-HBA) and protocatechuate across the membrane. Driven by the proton motive force. Also functions as a chemoreceptor, which is required for chemotaxis to aromatic acids. This chain is 4-hydroxybenzoate transporter PcaK (pcaK), found in Pseudomonas putida (Arthrobacter siderocapsulatus).